The following is a 443-amino-acid chain: ATP-dependent protease ATPase subunit HslU (443 aa).

ATP contacts are provided by residues Ile18, 60 to 65 (GVGKTE), Asp256, Glu321, and Arg393.

Belongs to the ClpX chaperone family. HslU subfamily. In terms of assembly, a double ring-shaped homohexamer of HslV is capped on each side by a ring-shaped HslU homohexamer. The assembly of the HslU/HslV complex is dependent on binding of ATP.

It is found in the cytoplasm. ATPase subunit of a proteasome-like degradation complex; this subunit has chaperone activity. The binding of ATP and its subsequent hydrolysis by HslU are essential for unfolding of protein substrates subsequently hydrolyzed by HslV. HslU recognizes the N-terminal part of its protein substrates and unfolds these before they are guided to HslV for hydrolysis. The chain is ATP-dependent protease ATPase subunit HslU from Escherichia coli O17:K52:H18 (strain UMN026 / ExPEC).